Here is a 106-residue protein sequence, read N- to C-terminus: ATP-dependent Clp protease adapter protein ClpS (106 aa).

It belongs to the ClpS family. Binds to the N-terminal domain of the chaperone ClpA.

Functionally, involved in the modulation of the specificity of the ClpAP-mediated ATP-dependent protein degradation. The chain is ATP-dependent Clp protease adapter protein ClpS from Citrobacter koseri (strain ATCC BAA-895 / CDC 4225-83 / SGSC4696).